A 371-amino-acid chain; its full sequence is Protein SOMBRERO (371 aa).

One can recognise an NAC domain in the interval V17–K166. Residues I118–G172 mediate DNA binding. Disordered stretches follow at residues E176–H213 and V316–F355. Basic and acidic residues predominate over residues N192–D201. Low complexity-rich tracts occupy residues S202–H213 and G340–S349.

In terms of tissue distribution, accumulates in maturing root cap cells, in both COL and LRC cells.

Its subcellular location is the nucleus. Transcription regulator. Together with BRN1 and BRN2, regulates cellular maturation of root cap. Represses stem cell-like divisions in the root cap daughter cells, and thus promotes daughter cell fate. Inhibits expression of its positive regulator FEZ in a feedback loop for controlled switches in cell division plane. Promotes the expression of genes involved in secondary cell walls (SCW) biosynthesis. The chain is Protein SOMBRERO (SMB) from Arabidopsis thaliana (Mouse-ear cress).